A 91-amino-acid chain; its full sequence is Large ribosomal subunit protein bL27 (91 aa).

The segment covering 1-10 (MAQKKGGGST) has biased composition (gly residues). A disordered region spans residues 1–20 (MAQKKGGGSTRNGRDSQPKM).

The protein belongs to the bacterial ribosomal protein bL27 family.

This Verminephrobacter eiseniae (strain EF01-2) protein is Large ribosomal subunit protein bL27.